We begin with the raw amino-acid sequence, 429 residues long: Probable M18 family aminopeptidase 2 (429 aa).

Zn(2+) contacts are provided by H82, H156, and H401.

Belongs to the peptidase M18 family. Requires Zn(2+) as cofactor.

The chain is Probable M18 family aminopeptidase 2 from Pseudomonas fluorescens (strain Pf0-1).